The sequence spans 429 residues: MSAIVDIIGREVLDSRGNPTVECDVLLESGVMGRAAVPSGASTGSREAIELRDGDKGRYLGKGVLKAVEHINTEISEAIMGLDASEQAFLDRTLIDLDGTENKGRLGANAMLAVSMAVAKAAAEEAGLPLYRYFGGSGAMQLPVPMMNIVNGGAHANNSLDIQEFMVMPVSQTSFREALRCGAEIFHALKKILADKGMSTAVGDEGGFAPNFSSNEECLNTIVQAIEKAGYRAGEDVLLALDCAASEFYHEAEGVYQLEGEGLKLSSTQFADYLANLCDKFPIVSIEDGMAEGDWDGWKTLTDKLGKRVQLVGDDLFVTNTKILKEGIEKGIGNSILIKINQIGTLTETFAAIEMAKRAGYTAVISHRSGETEDSTIADIAVGTNAGQIKTGSLSRSDRMAKYNQLLRIEEDLGDIASYPGKGAFYNLR.

Residue glutamine 163 coordinates (2R)-2-phosphoglycerate. The active-site Proton donor is the glutamate 205. Positions 242, 287, and 314 each coordinate Mg(2+). Residues lysine 339, arginine 368, serine 369, and lysine 390 each coordinate (2R)-2-phosphoglycerate. The active-site Proton acceptor is the lysine 339.

Belongs to the enolase family. The cofactor is Mg(2+).

It localises to the cytoplasm. It is found in the secreted. The protein localises to the cell surface. The catalysed reaction is (2R)-2-phosphoglycerate = phosphoenolpyruvate + H2O. It functions in the pathway carbohydrate degradation; glycolysis; pyruvate from D-glyceraldehyde 3-phosphate: step 4/5. Catalyzes the reversible conversion of 2-phosphoglycerate (2-PG) into phosphoenolpyruvate (PEP). It is essential for the degradation of carbohydrates via glycolysis. The protein is Enolase of Cupriavidus taiwanensis (strain DSM 17343 / BCRC 17206 / CCUG 44338 / CIP 107171 / LMG 19424 / R1) (Ralstonia taiwanensis (strain LMG 19424)).